Consider the following 104-residue polypeptide: uncharacterized protein (104 aa).

This is an uncharacterized protein from Acidianus two-tailed virus (ATV).